The primary structure comprises 503 residues: Arabinose import ATP-binding protein AraG (503 aa).

ABC transporter domains follow at residues 5 to 240 (LRFD…MVGR) and 253 to 497 (LGDV…LPQG). 37 to 44 (GENGAGKS) is an ATP binding site.

The protein belongs to the ABC transporter superfamily. Arabinose importer (TC 3.A.1.2.2) family. In terms of assembly, the complex is composed of two ATP-binding proteins (AraG), two transmembrane proteins (AraH) and a solute-binding protein (AraF).

It is found in the cell inner membrane. The catalysed reaction is L-arabinose(out) + ATP + H2O = L-arabinose(in) + ADP + phosphate + H(+). Part of the ABC transporter complex AraFGH involved in arabinose import. Responsible for energy coupling to the transport system. The chain is Arabinose import ATP-binding protein AraG from Burkholderia pseudomallei (strain 1710b).